Consider the following 1383-residue polypeptide: Cell surface hyaluronidase (1383 aa).

A disordered region spans residues 1–76; that stretch reads MYAAGSRGHS…QRTPSESRKR (76 aa). Residues 1–82 are Cytoplasmic-facing; it reads MYAAGSRGHS…SRKRKRHKNT (82 aa). 3 positions are modified to phosphoserine: S10, S53, and S63. Residues 83 to 103 form a helical; Signal-anchor for type II membrane protein membrane-spanning segment; sequence FICFAITSFSFFVALAVILGI. Residues 104–1383 are Extracellular-facing; sequence SSKYAPDENC…DLLQQALKVL (1280 aa). Residues 121 to 245 form the G8 domain; that stretch reads RNWDPGQDSA…QRTSWTMLAR (125 aa). One can recognise a GG-type lectin 1 domain in the interval 255–412; it reads GSYAFEKDFS…ISLSGFRVDI (158 aa). Residue N292 is glycosylated (N-linked (GlcNAc...) asparagine). PbH1 repeat units lie at residues 669–691, 711–733, and 791–812; these read HPNNHLINNAAAGSQDAGIWYLF, TPLGIFYNNRVHSNFKAGLFVDK, and GGDIIVQNSAFADNGKGLTFAS. Residues N914 and N1234 are each glycosylated (N-linked (GlcNAc...) asparagine). The GG-type lectin 2 domain occupies 1208-1366; it reads KSYLPVRFQS…MEEYGCSRTG (159 aa).

It belongs to the CEMIP family. Ca(2+) is required as a cofactor. Widely expressed. Strongly expressed in endothelial cells in the subcapsular sinus of lymph nodes and in the liver sinusoid, two primary sites implicated in systemic hyaluronan turnover.

It is found in the cell membrane. The enzyme catalyses Random hydrolysis of (1-&gt;4)-linkages between N-acetyl-beta-D-glucosamine and D-glucuronate residues in hyaluronate.. Functionally, cell surface hyaluronidase that mediates the initial cleavage of extracellular high-molecular-weight hyaluronan into intermediate-size hyaluronan of approximately 5 kDa fragments. Very specific to hyaluronan; not able to cleave chondroitin sulfate or dermatan sulfate. Has an essential function in systemic hyaluronan catabolism and turnover and regulates cell adhesion and migration via hyaluronan degradation at focal adhesion sites. Acts as a regulator of angiogenesis and heart morphogenesis by mediating degradation of extracellular hyaluronan, thereby regulating VEGF signaling. The protein is Cell surface hyaluronidase of Mus musculus (Mouse).